Here is a 407-residue protein sequence, read N- to C-terminus: D-mannose isomerase (407 aa).

Catalysis depends on proton donor/acceptor residues His-251 and His-383.

Belongs to the N-acylglucosamine 2-epimerase family. As to quaternary structure, homodimer.

It carries out the reaction D-mannose = D-fructose. It catalyses the reaction D-lyxose = D-xylulose. Its activity is regulated as follows. Significantly inhibited by divalent metal ions such as Cu(2+), Cd(2+) or Ca(2+). Catalyzes the reversible isomerization of D-mannose to D-fructose. Shows weaker activity on D-lyxose, but cannot use N-acetyl D-glucosamine. The polypeptide is D-mannose isomerase (Thermobifida fusca (Thermomonospora fusca)).